A 354-amino-acid chain; its full sequence is Trans-enoyl reductase pydC (354 aa).

The Enoyl reductase (ER) domain maps to 16–342 (ANTDPVTFEI…RREVSGEKIV (327 aa)). Residues 51–54 (CDYK), 180–183 (SPKN), Y198, 245–246 (FE), and 336–337 (VS) contribute to the NADP(+) site.

It belongs to the zinc-containing alcohol dehydrogenase family. As to quaternary structure, monomer.

It functions in the pathway mycotoxin biosynthesis. Its function is as follows. Trans-enoyl reductase; part of the gene cluster that mediates the biosynthesis of pyrrocidines, fungal natural products containing a macrocyclic para-cyclophane connected to a decahydrofluorene ring system that show potent antibiotic activities toward Gram-negative bacteria. Within the pathway, the PKS-NRPS pydA, with the help of the trans-enoyl reductase pydC, synthesize the polyketide-tyrosyl acyl thioester product which can be reductively off-loaded by the terminal reductase (R) domain in pydA. The PKS module of pydA acts in combination with the trans-acting enoyl reductase pydC to produce a methylated polyketide attached to the ACP domain. In parallel, the adenylation (A) domain of the NRPS module activated L-tyrosine, which is then transferred to the ACP domain. The condensation (C) domain subsequently link this group to the polyketide chain, forming an enzyme-bound amide. The alpha/beta hydrolase pydG is then required to catalyze the subsequent Knoevenagel condensation that affords the 3-pyrrolin-2-one ring, whereas the four proteins pydB, pydE, pydX and pydZ then function synergistically to form the cyclophane. PydB and the membrane-bound pydX and pydZ are lipid-binding proteins that can sequester and mold the pdyG product into the inverse S-shape. Binding of the medium chain reductase pydE to the complex would trigger the cascade oxidative cyclization. PydY is involved in the Diels-Alder cycloaddition that forms the decahydrofluorene core. Additional non-enzymatic hydroxylation yields pyrrocidine A2 which can be further reduced into pyrrocidine B by an endogenous reductase. This Acremonium sp protein is Trans-enoyl reductase pydC.